The primary structure comprises 858 residues: G2-specific protein kinase nim-1 (858 aa).

The region spanning 7-290 (YELLEKIGHG…TATLLNLPIV (284 aa)) is the Protein kinase domain. ATP contacts are provided by residues 13-21 (IGHGSFGII) and lysine 36. Aspartate 161 functions as the Proton acceptor in the catalytic mechanism. Threonine 194 bears the Phosphothreonine; by autocatalysis mark. Residues 291-383 (RLMRKEKEVV…QARVEAELQR (93 aa)) are a coiled coil. Disordered stretches follow at residues 495–693 (TKAP…LPQA) and 747–858 (SAVD…LSQS). Residues 516–525 (SNWEVPRETE) are compositionally biased toward basic and acidic residues. The span at 526–535 (MIDSGDESEA) shows a compositional bias: acidic residues. Composition is skewed to polar residues over residues 548 to 572 (SSKNPFSTVTTRSRPSLNSQQNSNV) and 580 to 598 (SKQTLATRSKTVSGVSSIG). The span at 636–648 (SANNINNSSNGGS) shows a compositional bias: low complexity. The segment covering 650–661 (APSSTVTSNITV) has biased composition (polar residues). Positions 676-691 (SSFSQQQNNQPQQSLP) are enriched in low complexity. Residues 760–780 (GQSQLPTRPRSQPQPITANFE) show a composition bias toward polar residues. Over residues 781–802 (QQQQQQQSNTNSISSSNSAGSG) the composition is skewed to low complexity.

Belongs to the protein kinase superfamily. CAMK Ser/Thr protein kinase family.

It is found in the nucleus. It catalyses the reaction L-seryl-[protein] + ATP = O-phospho-L-seryl-[protein] + ADP + H(+). The enzyme catalyses L-threonyl-[protein] + ATP = O-phospho-L-threonyl-[protein] + ADP + H(+). Functionally, protein kinase that plays an important role in mitotic regulation. The protein is G2-specific protein kinase nim-1 (nim-1) of Neurospora crassa (strain ATCC 24698 / 74-OR23-1A / CBS 708.71 / DSM 1257 / FGSC 987).